The primary structure comprises 179 residues: PP2C-like domain-containing protein R307 (179 aa).

The 176-residue stretch at 1–176 (MNESKRENIQ…DNVSVIIIFF (176 aa)) folds into the PPM-type phosphatase domain.

The protein localises to the virion. This Acanthamoeba polyphaga mimivirus (APMV) protein is PP2C-like domain-containing protein R307.